We begin with the raw amino-acid sequence, 51 residues long: Large ribosomal subunit protein eL39-like (51 aa).

This sequence belongs to the eukaryotic ribosomal protein eL39 family. As to quaternary structure, component of a male germ cell-specific 60S large ribosomal subunit (LSU), which contains RPL10L and RPL39L, instead of RPL10 and RPL39 paralogs. The composition of the rest of the complex is similar to classical ribosomes. In terms of tissue distribution, highly expressed in spermatocytes and spermatids. Highly expressed in embryonic stem cells.

The protein localises to the cytoplasm. Its function is as follows. Male germ cell-specific component of the ribosome, which is required for the formation of sperm and male fertility. Replaces the RPL39 paralog in the ribosome of male germ cells. The ribosome is a large ribonucleoprotein complex responsible for the synthesis of proteins in the cell. The male germ cell-specific ribosome displays a ribosomal polypeptide exit tunnel of distinct size and charge states compared with the classical ribosome. It is responsible for regulating the biosynthesis and folding of a subset of male germ-cell-specific proteins that are essential for the formation of sperm. The chain is Large ribosomal subunit protein eL39-like from Mus musculus (Mouse).